The following is an 870-amino-acid chain: MPKKNSPLLPKETTPTQSSVDTSGSSNLTWPVSEHTIRRPLWARLLGQILDPWLDLSIEPEHCVQYPEHCVQYNDGRPIIYVLEDYGLCNTLILDKACRKTKLPSPLIPLPGNPLQRKRAYLALSRRSSSNSLIPNQRGGKTHSDSLANLLQAHRIRDTLDVHLVPVSIFIGRTPDRQSGWFAVLFSENWALVGRFRRLLAVLLNGRNTIVCFAPPISVRQTLNEGLPPERTLRKLQRVLRAHFRRIRETVIGPDLSTRRLLVDNVLATEAVREAIASQAKRDGTDLSETWRKAQAYAWEIAADYSSPVIRSADFLFSHVWNRIYAGVLIHHVDSFKETAPGHEVVYVPSHRSHIDYLLLSYCLYQCGIVLPHIVAGINLNLPIVGTLLRKCGAFFIRRSIKGNMLYSIVLSEYVAQLVAGGYSLEYFIEGGRSRTGRLLQPKGGMIMMTLQAFLRQPRRPVLFQPIYIGYEKLIEGTSYLDELSGEPKKKESIWRLFWNIPKVLKQKYGQVVVNFGEPIALNDVLAELAPEWEGQALNENEKPAWLSNTVNHLARQIQTRINSAADVNPINLLALALLSTPKHAMGEADLIAQITLCKKILLELPYSNRVTVTPHTPERIIAHAEQINILTRVHHPLGDVLRVDGDNAVLLSYFRNNVLHLFTASAWVACCFKNNRRISRIALIRLGVGMYPFLQAELFLPWTEDQFAQHIQQVIELFVREGLLLSAGDEEEDPLTRNTSQTDEVFRLRAISHSLQQAFERYYITISILVKNGPGTLSASELESLCQLAAQRLSLLYASTAPEFFDKGLFRGFIQKLRELNLVWPDTYSKLLFDERLDTSAKDAQVILGRELRHTIERISPEATKPAPK.

The segment at 1-27 (MPKKNSPLLPKETTPTQSSVDTSGSSN) is disordered. Over residues 13 to 27 (TTPTQSSVDTSGSSN) the composition is skewed to polar residues. An HXXXXD motif motif is present at residues 351–356 (HRSHID).

Belongs to the GPAT/DAPAT family.

The protein resides in the cell inner membrane. It carries out the reaction sn-glycerol 3-phosphate + an acyl-CoA = a 1-acyl-sn-glycero-3-phosphate + CoA. The protein operates within phospholipid metabolism; CDP-diacylglycerol biosynthesis; CDP-diacylglycerol from sn-glycerol 3-phosphate: step 1/3. This chain is Glycerol-3-phosphate acyltransferase (plsB), found in Xylella fastidiosa (strain 9a5c).